We begin with the raw amino-acid sequence, 872 residues long: Sine oculis-binding protein homolog (872 aa).

A compositionally biased stretch (basic and acidic residues) spans 1-14 (MAEMEKEGRPPENK). Residues 1–26 (MAEMEKEGRPPENKRSRKPAHPVKRE) form a disordered region. 2 FCS-type zinc fingers span residues 142–180 (DDVSNVQIMCAWCQKVGIKRYSLSMGSEVKSFCSEKCFA) and 216–256 (FKNN…KCLN). Disordered stretches follow at residues 308 to 354 (RRKA…KSMP), 411 to 484 (FIRG…PGAP), and 550 to 619 (KPPN…GRSE). Over residues 319–344 (GQSQGPGPSASTTVSPSDTANCSVTK) the composition is skewed to polar residues. Low complexity predominate over residues 417 to 433 (HHASNPNSPLSNPMLPG). A compositionally biased stretch (pro residues) spans 460 to 484 (IHPPSTPTMPGNPPGLLPPPPPGAP). The SUMO interaction motif 1 (SIM); mediates the binding to polysumoylated substrates signature appears at 620–624 (VVDLT). Ser-629 is modified (phosphoserine). The SUMO interaction motif 2 (SIM); mediates the binding to polysumoylated substrates signature appears at 651–655 (VIDLT). Residue Lys-675 forms a Glycyl lysine isopeptide (Lys-Gly) (interchain with G-Cter in SUMO2) linkage. Phosphoserine is present on Ser-697. The disordered stretch occupies residues 728 to 770 (AAEGAKGAEPPPEQPPPPPPPPPAPPKKLLSPEEPAVSELESV). Pro residues predominate over residues 736–753 (EPPPEQPPPPPPPPPAPP).

This sequence belongs to the SOBP family. As to quaternary structure, interacts (via SIM domains) with SUMO1 and SUMO2.

In terms of biological role, implicated in development of the cochlea. The protein is Sine oculis-binding protein homolog of Bos taurus (Bovine).